We begin with the raw amino-acid sequence, 556 residues long: Membrane protein insertase YidC (556 aa).

The next 5 membrane-spanning stretches (helical) occupy residues 6 to 26 (IVLYMALALIGLSLWNAWQID), 332 to 352 (LDLTVDYGILWFLSSLLFSLM), 358 to 378 (VVGNWGWSIVLVTVLIKLAFY), 428 to 448 (LGGCLPILIQIPVFIALYWVL), and 501 to 521 (VMMFLPILFTGLFWNFPSGLV).

Belongs to the OXA1/ALB3/YidC family. Type 1 subfamily. Interacts with the Sec translocase complex via SecD. Specifically interacts with transmembrane segments of nascent integral membrane proteins during membrane integration.

The protein resides in the cell inner membrane. Its function is as follows. Required for the insertion and/or proper folding and/or complex formation of integral membrane proteins into the membrane. Involved in integration of membrane proteins that insert both dependently and independently of the Sec translocase complex, as well as at least some lipoproteins. Aids folding of multispanning membrane proteins. This is Membrane protein insertase YidC from Legionella pneumophila (strain Corby).